Here is a 378-residue protein sequence, read N- to C-terminus: Deoxyhypusine synthase (378 aa).

NAD(+)-binding positions include S107–S111, S133–G135, E139, and D253. E138–E139 contributes to the spermidine binding site. Residue D258 coordinates spermidine. G300 lines the NAD(+) pocket. H305 contacts spermidine. T325–G326 contacts NAD(+). Spermidine is bound by residues G331–D333 and E340–K346. K346 acts as the Nucleophile in catalysis. D359–A360 contacts NAD(+).

Belongs to the deoxyhypusine synthase family. NAD(+) is required as a cofactor.

The catalysed reaction is [eIF5A protein]-L-lysine + spermidine = [eIF5A protein]-deoxyhypusine + propane-1,3-diamine. The protein operates within protein modification; eIF5A hypusination. In terms of biological role, catalyzes the NAD-dependent oxidative cleavage of spermidine and the subsequent transfer of the butylamine moiety of spermidine to the epsilon-amino group of a specific lysine residue of the eIF-5A precursor protein to form the intermediate deoxyhypusine residue. The sequence is that of Deoxyhypusine synthase (DYS1) from Debaryomyces hansenii (strain ATCC 36239 / CBS 767 / BCRC 21394 / JCM 1990 / NBRC 0083 / IGC 2968) (Yeast).